Here is a 430-residue protein sequence, read N- to C-terminus: Adenylosuccinate synthetase (430 aa).

GTP-binding positions include Gly12–Lys18 and Gly40–Thr42. Asp13 acts as the Proton acceptor in catalysis. Mg(2+) contacts are provided by Asp13 and Gly40. IMP is bound by residues Asp13–Lys16, Asn38–His41, Thr128, Arg142, Gln223, Thr238, and Arg302. The active-site Proton donor is the His41. Substrate is bound at residue Thr298 to Arg304. Residues Arg304, Ser330 to Asp332, and Ser412 to Gly414 each bind GTP.

It belongs to the adenylosuccinate synthetase family. As to quaternary structure, homodimer. The cofactor is Mg(2+).

The protein localises to the cytoplasm. It catalyses the reaction IMP + L-aspartate + GTP = N(6)-(1,2-dicarboxyethyl)-AMP + GDP + phosphate + 2 H(+). It functions in the pathway purine metabolism; AMP biosynthesis via de novo pathway; AMP from IMP: step 1/2. Its function is as follows. Plays an important role in the de novo pathway of purine nucleotide biosynthesis. Catalyzes the first committed step in the biosynthesis of AMP from IMP. The chain is Adenylosuccinate synthetase from Enterococcus faecalis (strain ATCC 700802 / V583).